The chain runs to 495 residues: Probable cytosol aminopeptidase (495 aa).

Residues lysine 266 and aspartate 271 each coordinate Mn(2+). Lysine 278 is an active-site residue. Mn(2+) is bound by residues aspartate 289, aspartate 348, and glutamate 350. Arginine 352 is an active-site residue.

It belongs to the peptidase M17 family. Requires Mn(2+) as cofactor.

The protein resides in the cytoplasm. The enzyme catalyses Release of an N-terminal amino acid, Xaa-|-Yaa-, in which Xaa is preferably Leu, but may be other amino acids including Pro although not Arg or Lys, and Yaa may be Pro. Amino acid amides and methyl esters are also readily hydrolyzed, but rates on arylamides are exceedingly low.. It carries out the reaction Release of an N-terminal amino acid, preferentially leucine, but not glutamic or aspartic acids.. Presumably involved in the processing and regular turnover of intracellular proteins. Catalyzes the removal of unsubstituted N-terminal amino acids from various peptides. This is Probable cytosol aminopeptidase from Pseudomonas paraeruginosa (strain DSM 24068 / PA7) (Pseudomonas aeruginosa (strain PA7)).